The sequence spans 311 residues: Coproporphyrin III ferrochelatase 1 (311 aa).

Fe-coproporphyrin III contacts are provided by residues Tyr12, Arg29, 45 to 46, Ser53, and Tyr124; that span reads RY. Residues His182 and Glu263 each contribute to the Fe(2+) site.

This sequence belongs to the ferrochelatase family.

The protein localises to the cytoplasm. The catalysed reaction is Fe-coproporphyrin III + 2 H(+) = coproporphyrin III + Fe(2+). It participates in porphyrin-containing compound metabolism; protoheme biosynthesis. Involved in coproporphyrin-dependent heme b biosynthesis. Catalyzes the insertion of ferrous iron into coproporphyrin III to form Fe-coproporphyrin III. The chain is Coproporphyrin III ferrochelatase 1 from Bacillus anthracis.